A 117-amino-acid chain; its full sequence is Large ribosomal subunit protein bL20 (117 aa).

This sequence belongs to the bacterial ribosomal protein bL20 family.

In terms of biological role, binds directly to 23S ribosomal RNA and is necessary for the in vitro assembly process of the 50S ribosomal subunit. It is not involved in the protein synthesizing functions of that subunit. This Campylobacter jejuni subsp. jejuni serotype O:2 (strain ATCC 700819 / NCTC 11168) protein is Large ribosomal subunit protein bL20.